The chain runs to 103 residues: Large ribosomal subunit protein bL21 (103 aa).

This sequence belongs to the bacterial ribosomal protein bL21 family. As to quaternary structure, part of the 50S ribosomal subunit. Contacts protein L20.

This protein binds to 23S rRNA in the presence of protein L20. The chain is Large ribosomal subunit protein bL21 from Pseudoalteromonas atlantica (strain T6c / ATCC BAA-1087).